The chain runs to 543 residues: MDQSSGKGSGRDVGVAPVVLTILDGWGHRNDSEHNAIRQGDTPVMEALWHAYPHALIQASGSHVGLPDHQMGNSEVGHLTIGAGRIIRQELVRISDTVRDDQLNNTPALVELAEHLQNDTGTLHLLGLCSDGGVHSHVNHLCGLIHWAAAAGIKKVAVHAITDGRDTPTQSAMGSITLVQRAMEEAGVGHLASLCGRYWAMDRDKRWDRTEKAYDLYTDPTRSISDQSPQQLLAESYAAGITDEFLKPVRLSDDVMQDGDSVLVFNFRPDRARQIVQTLCLDDFDGFERRTTPKLDVVTFTQVEQDLPVSVAFPPEPLDDLLGQVVAEAGLRQYRTAETEKYPHVTYFMNGGIEQPLPGEERHLVPSPRVATYDLSPAMSADQLTDSCIDAIDQGTYSLIVINYANPDMVGHTGVMDAATEAIATVDRCIGRLLDAVGRRGGTMLITADHGNAELMQGPDGQAWTAHTTNPVPCILVEGEQRKLPGHGNDISLREDGGLADIAPTLLQILNLEQPAAMTGRSLIEPVSNVDPSPLSARLPLPV.

The Mn(2+) site is built by aspartate 24 and serine 74. Residue serine 74 is the Phosphoserine intermediate of the active site. Substrate contacts are provided by residues histidine 135, 165–166 (RD), arginine 197, arginine 203, 268–271 (RPDR), and lysine 341. 5 residues coordinate Mn(2+): aspartate 408, histidine 412, aspartate 449, histidine 450, and histidine 467.

Belongs to the BPG-independent phosphoglycerate mutase family. Monomer. The cofactor is Mn(2+).

It carries out the reaction (2R)-2-phosphoglycerate = (2R)-3-phosphoglycerate. It functions in the pathway carbohydrate degradation; glycolysis; pyruvate from D-glyceraldehyde 3-phosphate: step 3/5. Its function is as follows. Catalyzes the interconversion of 2-phosphoglycerate and 3-phosphoglycerate. The protein is 2,3-bisphosphoglycerate-independent phosphoglycerate mutase of Parasynechococcus marenigrum (strain WH8102).